A 1081-amino-acid polypeptide reads, in one-letter code: Disheveled-associated activator of morphogenesis 1-A (1081 aa).

Residues 45–418 (LPVPPVEELD…QIVIQNEKGQ (374 aa)) form the GBD/FH3 domain. Disordered regions lie at residues 455–476 (KEHN…AKTQ) and 519–615 (RTVC…PLKS). Residues 526 to 536 (PGGPPPPPGAP) are compositionally biased toward pro residues. Residues 538 to 547 (GPMSMPSGNF) are compositionally biased toward low complexity. Residues 548 to 585 (MPPPPPPPPPFPGGMAPPPPPPPPPPPPPGGPPPPPGL) are compositionally biased toward pro residues. The segment covering 586-600 (PLLGAAPPGAPLGLS) has biased composition (low complexity). An FH2 domain is found at 603 to 1012 (KKNIPQPKNP…EERRIRMEAQ (410 aa)). Residues 696–705 (AQNCNILLSR) form an actin-binding region. Positions 1013–1029 (LKEQRERERKARKAKEN) are enriched in basic and acidic residues. Disordered stretches follow at residues 1013-1038 (LKEQ…EFDD) and 1060-1081 (RKRI…KLNY). In terms of domain architecture, DAD spans 1030–1061 (GEEEGEFDDLVSALRSGEVFDKDLSKLKRNRK). A compositionally biased stretch (basic and acidic residues) spans 1070–1081 (SSRERPVTKLNY).

The protein resides in the cytoplasm. It is found in the cytoskeleton. It localises to the cilium basal body. Binds to disheveled (dsh) and Rho, and mediates Wnt-induced dsh-Rho complex formation during gastrulation. May play a role as a scaffolding protein to recruit Rho-GDP and Rho-GEF, thereby enhancing Rho-GTP formation. Can direct nucleation and elongation of new actin filaments. Involved in building functional cilia. Involved in building functional cilia. Involved in the organization of the subapical actin network in multiciliated epithelial cells. In Xenopus laevis (African clawed frog), this protein is Disheveled-associated activator of morphogenesis 1-A (daam1-a).